Consider the following 47-residue polypeptide: PhoP/PhoQ regulator MgrB (47 aa).

A helical transmembrane segment spans residues 6-26 (WVVLGIVVVVCLLLWAQVFNI).

Belongs to the MgrB family. May form homooligomers. Probably interacts with the periplasmic domain of PhoQ.

The protein resides in the cell inner membrane. PhoP-regulated transcription is redox-sensitive, being activated when the periplasm becomes more reducing. MgrB acts between DsbA/DsbB and PhoP/PhoQ in this pathway. Represses PhoP/PhoQ signaling, possibly by binding to the periplasmic domain of PhoQ, altering its activity and that of downstream effector PhoP. This is PhoP/PhoQ regulator MgrB from Salmonella agona (strain SL483).